The following is a 434-amino-acid chain: Ribosomal protein uS12 methylthiotransferase RimO (434 aa).

The region spanning 2–112 is the MTTase N-terminal domain; sequence AKIGFVSLGC…VLEAVQVVLP (111 aa). Residues Cys-11, Cys-47, Cys-76, Cys-142, Cys-146, and Cys-149 each coordinate [4Fe-4S] cluster. Residues 128-365 form the Radical SAM core domain; it reads LTPRHYAYVK…LELQARVSLR (238 aa). The region spanning 368-434 is the TRAM domain; the sequence is QRFVGKTLEV…DTYDLHGVQA (67 aa).

It belongs to the methylthiotransferase family. RimO subfamily. [4Fe-4S] cluster is required as a cofactor.

The protein resides in the cytoplasm. The catalysed reaction is L-aspartate(89)-[ribosomal protein uS12]-hydrogen + (sulfur carrier)-SH + AH2 + 2 S-adenosyl-L-methionine = 3-methylsulfanyl-L-aspartate(89)-[ribosomal protein uS12]-hydrogen + (sulfur carrier)-H + 5'-deoxyadenosine + L-methionine + A + S-adenosyl-L-homocysteine + 2 H(+). Functionally, catalyzes the methylthiolation of an aspartic acid residue of ribosomal protein uS12. This is Ribosomal protein uS12 methylthiotransferase RimO from Thermus thermophilus (strain ATCC 27634 / DSM 579 / HB8).